Consider the following 199-residue polypeptide: Outer dense fiber protein 4 (199 aa).

A compositionally biased stretch (basic and acidic residues) spans 1-14 (MNIRSLERAGRAGK). Positions 1–25 (MNIRSLERAGRAGKQDGVAVSPGQE) are disordered. Ser53 is modified (phosphoserine). A run of 3 helical transmembrane segments spans residues 68–88 (IAQV…VVMV), 109–128 (VTTK…LHIY), and 159–179 (LALG…IPGL).

The protein resides in the membrane. Its function is as follows. Component of the outer dense fibers (ODF) of spermatozoa which could be involved in sperm tail structure, sperm movement and general organization of cellular cytoskeleton. This chain is Outer dense fiber protein 4 (ODF4), found in Bos taurus (Bovine).